The chain runs to 343 residues: Large ribosomal subunit protein uL3 (343 aa).

Disordered stretches follow at residues 1 to 31 (MGHRKLASPRRGSAGVRPRKRASEILPTPRS) and 238 to 262 (KGSRKVGARGPSFSTPSYVPQPGQM).

The protein belongs to the universal ribosomal protein uL3 family. Part of the 50S ribosomal subunit. Forms a cluster with proteins L14 and L24e.

In terms of biological role, one of the primary rRNA binding proteins, it binds directly near the 3'-end of the 23S rRNA, where it nucleates assembly of the 50S subunit. The sequence is that of Large ribosomal subunit protein uL3 from Sulfurisphaera tokodaii (strain DSM 16993 / JCM 10545 / NBRC 100140 / 7) (Sulfolobus tokodaii).